The sequence spans 321 residues: Iron(3+)-hydroxamate-binding protein YxeB (321 aa).

The first 20 residues, 1–20, serve as a signal peptide directing secretion; the sequence is MKKNILLVGMLVLLLMFVSA. Cys21 carries the N-palmitoyl cysteine lipid modification. Cys21 carries S-diacylglycerol cysteine lipidation. Over residues 24-33 the composition is skewed to low complexity; sequence TASKGSSSDS. The interval 24–48 is disordered; the sequence is TASKGSSSDSASEKTEMRTYKSPKG. The 259-residue stretch at 58 to 316 folds into the Fe/B12 periplasmic-binding domain; the sequence is RIVTDFYAGE…IITDMLIKRA (259 aa).

Belongs to the bacterial solute-binding protein 8 family. As to quaternary structure, the complex is composed of an ATP-binding protein (FhuC), two transmembrane proteins (FhuB and FhuG) and a solute-binding protein (FhuD or YxeB).

It localises to the cell membrane. Its subcellular location is the membrane raft. Part of the ABC transporter complex FhuCBGD involved in iron(3+)-hydroxamate import. Binds the iron(3+)-hydroxamate complex and transfers it to the membrane-bound permease. Partially required for the transport of desferrioxamine. This Bacillus subtilis (strain 168) protein is Iron(3+)-hydroxamate-binding protein YxeB (yxeB).